A 295-amino-acid polypeptide reads, in one-letter code: uncharacterized protein (295 aa).

An N-terminal signal peptide occupies residues 1-26 (MKKYLALAAIVAICALWLTQNSNFEA).

This is an uncharacterized protein from Archaeoglobus fulgidus (strain ATCC 49558 / DSM 4304 / JCM 9628 / NBRC 100126 / VC-16).